The sequence spans 115 residues: Holo-[acyl-carrier-protein] synthase (115 aa).

Mg(2+) contacts are provided by D6 and E51.

The protein belongs to the P-Pant transferase superfamily. AcpS family. It depends on Mg(2+) as a cofactor.

Its subcellular location is the cytoplasm. It carries out the reaction apo-[ACP] + CoA = holo-[ACP] + adenosine 3',5'-bisphosphate + H(+). In terms of biological role, transfers the 4'-phosphopantetheine moiety from coenzyme A to a Ser of acyl-carrier-protein. The protein is Holo-[acyl-carrier-protein] synthase of Campylobacter jejuni (strain RM1221).